Consider the following 174-residue polypeptide: Cathepsin B-like cysteine proteinase 3 (174 aa).

Cystine bridges form between C22–C55 and C30–C42. Catalysis depends on residues H122 and N142.

This sequence belongs to the peptidase C1 family.

Functionally, expression of the protease correlates with blood-feeding and suggests a role for the protease in blood digestion. This Ostertagia ostertagi (Brown stomach worm) protein is Cathepsin B-like cysteine proteinase 3 (CP-3).